The sequence spans 889 residues: DNA mismatch repair protein MutS (889 aa).

641-648 (GPNMAGKS) lines the ATP pocket.

This sequence belongs to the DNA mismatch repair MutS family.

In terms of biological role, this protein is involved in the repair of mismatches in DNA. It is possible that it carries out the mismatch recognition step. This protein has a weak ATPase activity. This is DNA mismatch repair protein MutS from Orientia tsutsugamushi (strain Boryong) (Rickettsia tsutsugamushi).